A 287-amino-acid polypeptide reads, in one-letter code: Phosphatidylserine decarboxylase proenzyme (287 aa).

Residues D90, H147, and S253 each act as charge relay system; for autoendoproteolytic cleavage activity in the active site. S253 acts as the Schiff-base intermediate with substrate; via pyruvic acid; for decarboxylase activity in catalysis. At S253 the chain carries Pyruvic acid (Ser); by autocatalysis.

Belongs to the phosphatidylserine decarboxylase family. PSD-B subfamily. Prokaryotic type I sub-subfamily. As to quaternary structure, heterodimer of a large membrane-associated beta subunit and a small pyruvoyl-containing alpha subunit. Pyruvate serves as cofactor. Is synthesized initially as an inactive proenzyme. Formation of the active enzyme involves a self-maturation process in which the active site pyruvoyl group is generated from an internal serine residue via an autocatalytic post-translational modification. Two non-identical subunits are generated from the proenzyme in this reaction, and the pyruvate is formed at the N-terminus of the alpha chain, which is derived from the carboxyl end of the proenzyme. The autoendoproteolytic cleavage occurs by a canonical serine protease mechanism, in which the side chain hydroxyl group of the serine supplies its oxygen atom to form the C-terminus of the beta chain, while the remainder of the serine residue undergoes an oxidative deamination to produce ammonia and the pyruvoyl prosthetic group on the alpha chain. During this reaction, the Ser that is part of the protease active site of the proenzyme becomes the pyruvoyl prosthetic group, which constitutes an essential element of the active site of the mature decarboxylase.

It localises to the cell membrane. It catalyses the reaction a 1,2-diacyl-sn-glycero-3-phospho-L-serine + H(+) = a 1,2-diacyl-sn-glycero-3-phosphoethanolamine + CO2. It functions in the pathway phospholipid metabolism; phosphatidylethanolamine biosynthesis; phosphatidylethanolamine from CDP-diacylglycerol: step 2/2. Its function is as follows. Catalyzes the formation of phosphatidylethanolamine (PtdEtn) from phosphatidylserine (PtdSer). The protein is Phosphatidylserine decarboxylase proenzyme of Aliivibrio fischeri (strain ATCC 700601 / ES114) (Vibrio fischeri).